Here is a 150-residue protein sequence, read N- to C-terminus: Myeloid-derived growth factor homolog (150 aa).

Residues methionine 1–serine 22 form the signal peptide.

The protein belongs to the MYDGF family.

The protein localises to the secreted. This Dictyostelium discoideum (Social amoeba) protein is Myeloid-derived growth factor homolog.